A 343-amino-acid polypeptide reads, in one-letter code: Anthranilate phosphoribosyltransferase (343 aa).

5-phospho-alpha-D-ribose 1-diphosphate-binding positions include glycine 86, 89 to 90, threonine 94, 96 to 99, 114 to 122, and serine 126; these read GD, NIST, and KHGNKSASG. Glycine 86 is a binding site for anthranilate. Serine 98 lines the Mg(2+) pocket. Residue asparagine 117 participates in anthranilate binding. Position 172 (arginine 172) interacts with anthranilate. Residues aspartate 231 and glutamate 232 each coordinate Mg(2+).

This sequence belongs to the anthranilate phosphoribosyltransferase family. As to quaternary structure, homodimer. Mg(2+) serves as cofactor.

It carries out the reaction N-(5-phospho-beta-D-ribosyl)anthranilate + diphosphate = 5-phospho-alpha-D-ribose 1-diphosphate + anthranilate. It functions in the pathway amino-acid biosynthesis; L-tryptophan biosynthesis; L-tryptophan from chorismate: step 2/5. Its function is as follows. Catalyzes the transfer of the phosphoribosyl group of 5-phosphorylribose-1-pyrophosphate (PRPP) to anthranilate to yield N-(5'-phosphoribosyl)-anthranilate (PRA). The sequence is that of Anthranilate phosphoribosyltransferase from Prochlorococcus marinus subsp. pastoris (strain CCMP1986 / NIES-2087 / MED4).